A 158-amino-acid chain; its full sequence is Cyclic pyranopterin monophosphate synthase (158 aa).

Substrate-binding positions include 76–78 and 114–115; these read LCH and ME. D129 is an active-site residue.

This sequence belongs to the MoaC family. As to quaternary structure, homohexamer; trimer of dimers.

It carries out the reaction (8S)-3',8-cyclo-7,8-dihydroguanosine 5'-triphosphate = cyclic pyranopterin phosphate + diphosphate. Its pathway is cofactor biosynthesis; molybdopterin biosynthesis. Catalyzes the conversion of (8S)-3',8-cyclo-7,8-dihydroguanosine 5'-triphosphate to cyclic pyranopterin monophosphate (cPMP). The sequence is that of Cyclic pyranopterin monophosphate synthase from Shewanella baltica (strain OS223).